We begin with the raw amino-acid sequence, 926 residues long: Ubiquitin carboxyl-terminal hydrolase 4 (926 aa).

The Rhodanese domain occupies 205–328 (SQMEILLIDI…WLKSNYGRQV (124 aa)). Phosphoserine is present on serine 443. The 362-residue stretch at 562 to 923 (VGLENLGNSC…NAYVLFYHRV (362 aa)) folds into the USP domain. The active-site Nucleophile is cysteine 571. Catalysis depends on histidine 880, which acts as the Proton acceptor.

Belongs to the peptidase C19 family. Interacts with BRO1, RFU1 and VPS32. Associates with the 26S proteasome.

The protein localises to the cytoplasm. The protein resides in the late endosome membrane. It carries out the reaction Thiol-dependent hydrolysis of ester, thioester, amide, peptide and isopeptide bonds formed by the C-terminal Gly of ubiquitin (a 76-residue protein attached to proteins as an intracellular targeting signal).. With respect to regulation, RFU1 is an inhibitor of deubiquitination activity. Its function is as follows. Ubiquitin thioesterase that acts at the late endosome/prevacuolar compartment to recover ubiquitin from ubiquitinated membrane proteins en route to the vacuole. Also removes ubiquitin from soluble proteins targeted to proteasomes. Is essential to maintain a normal level of free ubiquitin. Involved in the ammonium-induced down-regulation of the GAP1 permease and the UME3 destruction in response to oxidative stress. Has a role in the RAD9 checkpoint response to TOP1 poisons. Required for promoting coordination of DNA replication and avoids DNA overreplication. This is Ubiquitin carboxyl-terminal hydrolase 4 (DOA4) from Saccharomyces cerevisiae (strain ATCC 204508 / S288c) (Baker's yeast).